The sequence spans 556 residues: (-)-alpha-pinene synthase (556 aa).

Residues aspartate 309, aspartate 313, aspartate 453, and glutamate 461 each contribute to the Mg(2+) site. Residues 309–313 (DDMYD) carry the DDXXD motif motif.

Belongs to the terpene synthase family. Tpsa subfamily. Requires Mg(2+) as cofactor. Mn(2+) is required as a cofactor. Expressed in ripe fruits and roots. Not detected in vegetative tissues.

It localises to the cytoplasm. Its subcellular location is the cytosol. It catalyses the reaction (2E)-geranyl diphosphate = (1S,5S)-alpha-pinene + diphosphate. The protein operates within secondary metabolite biosynthesis; terpenoid biosynthesis. Monoterpene synthase catalyzing the production of (-)-alpha-pinene, beta-phellandrene and beta-myrcene as the major products. Unable to use farnesyl diphosphate as substrate. Exclusively expressed in the fruit of wild strawberries. Not detected in cultivated varieties. This chain is (-)-alpha-pinene synthase, found in Fragaria vesca (Woodland strawberry).